Here is a 335-residue protein sequence, read N- to C-terminus: Serine/threonine-protein kinase crk1 (335 aa).

Positions 11–292 constitute a Protein kinase domain; the sequence is YVKERKVGEG…AQQALEHHYF (282 aa). ATP is bound by residues 17–25 and lysine 40; that span reads VGEGTYAVV. Catalysis depends on aspartate 133, which acts as the Proton acceptor. A Phosphoserine modification is found at serine 162. Serine 165 carries the phosphoserine; by CAK modification. Position 318 is a phosphoserine (serine 318).

It belongs to the protein kinase superfamily. CMGC Ser/Thr protein kinase family. CDC2/CDKX subfamily. In terms of assembly, one of the nine subunits forming the core-TFIIH basal transcription factor. Interacts with mcs2 and tfb3.

The protein resides in the cytoplasm. It localises to the nucleus. It catalyses the reaction [DNA-directed RNA polymerase] + ATP = phospho-[DNA-directed RNA polymerase] + ADP + H(+). Protein kinase essential for cell proliferation, where it is required for completion of cytokinesis. Phosphorylates the C-terminal repeat domain (CTD) of RNA polymerase II. The chain is Serine/threonine-protein kinase crk1 (crk1) from Schizosaccharomyces pombe (strain 972 / ATCC 24843) (Fission yeast).